A 200-amino-acid polypeptide reads, in one-letter code: Large ribosomal subunit protein bL25 (200 aa).

This sequence belongs to the bacterial ribosomal protein bL25 family. CTC subfamily. Part of the 50S ribosomal subunit; part of the 5S rRNA/L5/L18/L25 subcomplex. Contacts the 5S rRNA. Binds to the 5S rRNA independently of L5 and L18.

In terms of biological role, this is one of the proteins that binds to the 5S RNA in the ribosome where it forms part of the central protuberance. In Leifsonia xyli subsp. xyli (strain CTCB07), this protein is Large ribosomal subunit protein bL25.